The primary structure comprises 194 residues: Dephospho-CoA kinase (194 aa).

Residues 3 to 194 (TIGLTGGIGS…EQVDGFWGGL (192 aa)) form the DPCK domain. 11–16 (GSGKST) provides a ligand contact to ATP.

The protein belongs to the CoaE family.

The protein resides in the cytoplasm. It carries out the reaction 3'-dephospho-CoA + ATP = ADP + CoA + H(+). Its pathway is cofactor biosynthesis; coenzyme A biosynthesis; CoA from (R)-pantothenate: step 5/5. Catalyzes the phosphorylation of the 3'-hydroxyl group of dephosphocoenzyme A to form coenzyme A. This Corynebacterium jeikeium (strain K411) protein is Dephospho-CoA kinase.